The sequence spans 155 residues: MGGNGSTCKPDTERQGTLSTAAPTTSPAPCLSNHHNKKHLILAFCAGVLLTLLLIAFIFLIIKSYRKYRRERLPISPGPLLRWVPLLSGTMADHSKPQAPDPHSDPPAKLSSIPGESLTYASTTFKLSEEKSNHLAENHSADFDPIVYAQIKVTN.

A disordered region spans residues 1 to 28 (MGGNGSTCKPDTERQGTLSTAAPTTSPA). The segment covering 19 to 28 (STAAPTTSPA) has biased composition (low complexity). The chain crosses the membrane as a helical span at residues 41–61 (ILAFCAGVLLTLLLIAFIFLI). Residues 92–114 (ADHSKPQAPDPHSDPPAKLSSIP) are disordered. S140 carries the phosphoserine modification.

It is found in the membrane. The chain is Transmembrane protein C1orf162 (C1orf162) from Homo sapiens (Human).